Consider the following 363-residue polypeptide: p21-activated protein kinase-interacting protein 1-like (363 aa).

5 WD repeats span residues 38 to 75, 78 to 116, 119 to 158, 200 to 238, and 241 to 282; these read AHTA…EHGA, HHNG…CQQT, AHKG…SAFI, NNPK…CVCE, and AHEN…VQTS. Positions 309–363 are disordered; it reads KEKSNTAVTASAVKDCDRPKKKKAQNETTDKEASETQVVHKKRKPETKQKKKKPS. The span at 322–342 shows a compositional bias: basic and acidic residues; the sequence is KDCDRPKKKKAQNETTDKEAS. Residues 347-363 show a composition bias toward basic residues; it reads VHKKRKPETKQKKKKPS.

It is found in the nucleus. It localises to the nucleolus. Functionally, negatively regulates the PAK1 kinase. PAK1 is a member of the PAK kinase family, which has been shown to play a positive role in the regulation of signaling pathways involving MAPK8 and RELA. PAK1 exists as an inactive homodimer, which is activated by binding of small GTPases such as CDC42 to an N-terminal regulatory domain. PAK1IP1 also binds to the N-terminus of PAK1, and inhibits the specific activation of PAK1 by CDC42. May be involved in ribosomal large subunit assembly. This chain is p21-activated protein kinase-interacting protein 1-like (pak1ip1), found in Xenopus laevis (African clawed frog).